Reading from the N-terminus, the 250-residue chain is MIAWLDPQDPFPPVDEALGPDSEAPGLLAASRDLSPQRLLLAYRQGIFPWYSSGQPVLWWSTDPRMVLAPPALRVSLNLRKTLRRVLRDADWEIRVDDDFLAVMRACATTPRDGQDGTWITDDIIAAYGTLHRNGMAHSVESWYRGERVGGLYGVALGRMFFGESMFAHRTDASKIALAALCAFLGNHGVAMIDCQQETDHLASLGARPIPRAEFVAHVRAATALPAISPWRFDKSVLERWAGTPAAPAG.

The protein belongs to the L/F-transferase family.

It is found in the cytoplasm. It carries out the reaction N-terminal L-lysyl-[protein] + L-leucyl-tRNA(Leu) = N-terminal L-leucyl-L-lysyl-[protein] + tRNA(Leu) + H(+). It catalyses the reaction N-terminal L-arginyl-[protein] + L-leucyl-tRNA(Leu) = N-terminal L-leucyl-L-arginyl-[protein] + tRNA(Leu) + H(+). The catalysed reaction is L-phenylalanyl-tRNA(Phe) + an N-terminal L-alpha-aminoacyl-[protein] = an N-terminal L-phenylalanyl-L-alpha-aminoacyl-[protein] + tRNA(Phe). Functions in the N-end rule pathway of protein degradation where it conjugates Leu, Phe and, less efficiently, Met from aminoacyl-tRNAs to the N-termini of proteins containing an N-terminal arginine or lysine. The protein is Leucyl/phenylalanyl-tRNA--protein transferase of Cupriavidus necator (strain ATCC 17699 / DSM 428 / KCTC 22496 / NCIMB 10442 / H16 / Stanier 337) (Ralstonia eutropha).